A 490-amino-acid chain; its full sequence is Glutamate--tRNA ligase (490 aa).

A 'HIGH' region motif is present at residues 12-22; the sequence is PSPTGTPHVGL. A 'KMSKS' region motif is present at residues 256–260; sequence KLSKR. Lysine 259 is an ATP binding site.

This sequence belongs to the class-I aminoacyl-tRNA synthetase family. Glutamate--tRNA ligase type 1 subfamily. In terms of assembly, monomer.

It is found in the cytoplasm. The catalysed reaction is tRNA(Glu) + L-glutamate + ATP = L-glutamyl-tRNA(Glu) + AMP + diphosphate. Catalyzes the attachment of glutamate to tRNA(Glu) in a two-step reaction: glutamate is first activated by ATP to form Glu-AMP and then transferred to the acceptor end of tRNA(Glu). This Mycobacterium sp. (strain KMS) protein is Glutamate--tRNA ligase.